The following is a 529-amino-acid chain: Glucose-6-phosphate isomerase (529 aa).

Catalysis depends on glutamate 322, which acts as the Proton donor. Active-site residues include histidine 351 and lysine 455.

This sequence belongs to the GPI family.

It localises to the cytoplasm. The enzyme catalyses alpha-D-glucose 6-phosphate = beta-D-fructose 6-phosphate. Its pathway is carbohydrate biosynthesis; gluconeogenesis. It functions in the pathway carbohydrate degradation; glycolysis; D-glyceraldehyde 3-phosphate and glycerone phosphate from D-glucose: step 2/4. In terms of biological role, catalyzes the reversible isomerization of glucose-6-phosphate to fructose-6-phosphate. This Thermosynechococcus vestitus (strain NIES-2133 / IAM M-273 / BP-1) protein is Glucose-6-phosphate isomerase.